The following is a 72-amino-acid chain: Prophage late control protein OgrK (72 aa).

Functionally, cryptic version of the phage P2 OGR protein which acts as an activator of P2 late transcription. This Escherichia coli (strain K12) protein is Prophage late control protein OgrK (ogrK).